The following is a 121-amino-acid chain: MSFNDKAAEAVASGDIGVGWLLSDQCEVFWNVGSWEGANPCEILTEWKKSAMTPITIAGLKFTIIGKTPERLVSTNIGGQGHIVGAKCTNYPGYLVCWCPATVGPNIAYSVIQKLADLVKA.

It belongs to the Asgard profilin family.

Its subcellular location is the cytoplasm. The protein resides in the cytoskeleton. Binds to actin and affects the structure of the cytoskeleton. At high concentrations inhibits spontaneous rabbit actin nucleation. This strongly suggests this archaea has a profilin-regulated actin system, and actin-type genes can be identified in this organism. The chain is Heimdall profilin from Heimdallarchaeota archaeon (strain LC_2).